The following is a 1879-amino-acid chain: Protein TIC 214 (1879 aa).

Transmembrane regions (helical) follow at residues 18–38 (IINSVVVVGLYYGFLTTFSIG), 67–87 (FITGQLMMFISIYYAPLHLAL), 90–110 (PHTITVLALPYLLFHFFWNNH), 127–147 (LSIQCVFLNNLIFQLFNHFIL), 175–195 (VGWLIGHILFMKWVGLVLVWI), and 218–238 (IFSILLFITCVYYLGRIPSPI). The segment at 243–291 (LKETEERGESEEERDVEKTSETKGTKQEQEGSTEEDPSPSLFSEEKEDP) is disordered. Residues 257-271 (DVEKTSETKGTKQEQ) are compositionally biased toward basic and acidic residues.

It belongs to the TIC214 family. Part of the Tic complex.

It is found in the plastid. Its subcellular location is the chloroplast inner membrane. Involved in protein precursor import into chloroplasts. May be part of an intermediate translocation complex acting as a protein-conducting channel at the inner envelope. In Morus indica (Mulberry), this protein is Protein TIC 214.